Reading from the N-terminus, the 216-residue chain is Uracil phosphoribosyltransferase (216 aa).

Residues R32, R41, 75 to 78, and K77 each bind GTP; that span reads LGKI. A 5-phospho-alpha-D-ribose 1-diphosphate-binding site is contributed by R85. R102 is a binding site for GTP. R110 contacts 5-phospho-alpha-D-ribose 1-diphosphate. Residue R131 coordinates GTP. Residues D137 and 137–145 contribute to the 5-phospho-alpha-D-ribose 1-diphosphate site; that span reads DPMLATGGS. Y201 contributes to the D-ribose 5-phosphate binding site. Uracil contacts are provided by residues L202 and 207–209; that span reads GDF. D208 is a 5-phospho-alpha-D-ribose 1-diphosphate binding site.

This sequence belongs to the UPRTase family. It depends on Mg(2+) as a cofactor.

The enzyme catalyses UMP + diphosphate = 5-phospho-alpha-D-ribose 1-diphosphate + uracil. Its pathway is pyrimidine metabolism; UMP biosynthesis via salvage pathway; UMP from uracil: step 1/1. Its activity is regulated as follows. Allosterically activated by GTP. Catalyzes the conversion of uracil and 5-phospho-alpha-D-ribose 1-diphosphate (PRPP) to UMP and diphosphate. The sequence is that of Uracil phosphoribosyltransferase (FUR1) from Lachancea kluyveri (Yeast).